The chain runs to 497 residues: Pancreatic alpha-amylase (497 aa).

Position 1 is a pyrrolidone carboxylic acid (Gln1). 3 disulfides stabilise this stretch: Cys28–Cys86, Cys70–Cys115, and Cys141–Cys160. Ca(2+) contacts are provided by Asn100, Arg158, and Asp167. Arg195 provides a ligand contact to chloride. Asp197 acts as the Nucleophile in catalysis. His201 contributes to the Ca(2+) binding site. The active-site Proton donor is the Glu233. Residues Asn298 and Arg337 each coordinate chloride. Disulfide bonds link Cys379-Cys385 and Cys451-Cys463.

Belongs to the glycosyl hydrolase 13 family. As to quaternary structure, monomer. Ca(2+) is required as a cofactor. Requires chloride as cofactor.

The protein resides in the secreted. Its subcellular location is the extracellular space. It carries out the reaction Endohydrolysis of (1-&gt;4)-alpha-D-glucosidic linkages in polysaccharides containing three or more (1-&gt;4)-alpha-linked D-glucose units.. The protein is Pancreatic alpha-amylase of Struthio camelus (Common ostrich).